Reading from the N-terminus, the 131-residue chain is MATVPTRSGSPRQLTTKQTGDAWEVQARRWLEGKGLRFVAANVNERGGEIDLIMREGRTTVFVEVRYRRSALYGGAAASVTRSKQHKLLQTARLWLARHNGSFDTVDCRFDVVAFTGNEVEWIKDTFNDHS.

The span at 1-19 shows a compositional bias: polar residues; that stretch reads MATVPTRSGSPRQLTTKQT. The interval 1 to 20 is disordered; the sequence is MATVPTRSGSPRQLTTKQTG.

Belongs to the UPF0102 family.

In Escherichia coli O157:H7, this protein is UPF0102 protein YraN.